The chain runs to 235 residues: Class B acid phosphatase (235 aa).

The signal sequence occupies residues 1-22 (MKNLLKLSAIAILAASAVSTFA). The active-site Nucleophile is the Asp67. Mg(2+) is bound by residues Asp67 and Asp69. Asp69 acts as the Proton donor in catalysis. Substrate contacts are provided by residues 135-136 (TG) and Lys175. Position 190 (Asp190) interacts with Mg(2+).

The protein belongs to the class B bacterial acid phosphatase family. In terms of assembly, homotetramer. Mg(2+) serves as cofactor.

Its subcellular location is the periplasm. The catalysed reaction is a phosphate monoester + H2O = an alcohol + phosphate. Dephosphorylates several organic phosphate monoesters. Also has a phosphotransferase activity catalyzing the transfer of low-energy phosphate groups from organic phosphate monoesters to free hydroxyl groups of various organic compounds. This is Class B acid phosphatase from Haemophilus parainfluenzae (strain T3T1).